Reading from the N-terminus, the 294-residue chain is Acetylglutamate kinase (294 aa).

Substrate-binding positions include 63–64 (GG), Arg-85, and Asn-188.

The protein belongs to the acetylglutamate kinase family. ArgB subfamily.

The protein resides in the cytoplasm. It catalyses the reaction N-acetyl-L-glutamate + ATP = N-acetyl-L-glutamyl 5-phosphate + ADP. The protein operates within amino-acid biosynthesis; L-arginine biosynthesis; N(2)-acetyl-L-ornithine from L-glutamate: step 2/4. Catalyzes the ATP-dependent phosphorylation of N-acetyl-L-glutamate. This Methanococcus vannielii (strain ATCC 35089 / DSM 1224 / JCM 13029 / OCM 148 / SB) protein is Acetylglutamate kinase.